Reading from the N-terminus, the 46-residue chain is Large ribosomal subunit protein bL34 (46 aa).

It belongs to the bacterial ribosomal protein bL34 family.

This Synechococcus sp. (strain JA-2-3B'a(2-13)) (Cyanobacteria bacterium Yellowstone B-Prime) protein is Large ribosomal subunit protein bL34.